We begin with the raw amino-acid sequence, 112 residues long: uncharacterized protein (112 aa).

The disordered stretch occupies residues 1 to 27 (MIASIGDSAEPPLRRTRRAQQQDRPPT).

This is an uncharacterized protein from Orgyia pseudotsugata multicapsid polyhedrosis virus (OpMNPV).